Consider the following 136-residue polypeptide: Neuropeptide CCHamide-2 (136 aa).

Positions 1–24 are cleaved as a signal peptide; it reads MKSTISLLLVVICTVVLAAQQSQA. Cysteine 28 and cysteine 35 are disulfide-bonded. Histidine 39 bears the Histidine amide mark. The disordered stretch occupies residues 42–78; the sequence is RSLSPGSGSGTGVGGGMGEAASGGQEPDYVRPNGLLP. Positions 43–136 are excised as a propeptide; the sequence is SLSPGSGSGT…ANSAELNGVN (94 aa). Gly residues predominate over residues 48-59; the sequence is SGSGTGVGGGMG.

Expressed in endocrine cells of the larval midgut (at protein level). Also expressed in endocrine cells of the midgut of adult males and females (at protein level). In the midgut, expression occurs mainly in the anterior region (at protein level). In the larval central nervous system, expressed in about 40 neurons in the brain hemispheres and ventral nerve cord (at protein level). Highly expressed in larval and adult gut with low levels in larval and adult brain. Very little expression in the larval fat body. However, another study shows high levels of expression in the larval fat body as well as the larval gut with low levels in the larval central nervous system.

It localises to the secreted. Ligand for the CCHamide-2 receptor CCHa2-R. In one study, shown to be an orexigenic peptide which induces appetite and stimulates food intake, leading to the release of insulin-like peptides which stimulate growth. In another study, shown to be a nutrient-sensitive peptide derived from peripheral tissues which controls growth by directly regulating the production and release of insulin-like peptides. The sequence is that of Neuropeptide CCHamide-2 from Drosophila melanogaster (Fruit fly).